Reading from the N-terminus, the 406-residue chain is 2,3-bisphosphoglycerate-independent phosphoglycerate mutase (406 aa).

The disordered stretch occupies residues 164-184; it reads VSSNDPKKTGVQPKTIHPDDD.

Belongs to the BPG-independent phosphoglycerate mutase family. A-PGAM subfamily.

It catalyses the reaction (2R)-2-phosphoglycerate = (2R)-3-phosphoglycerate. It functions in the pathway carbohydrate degradation; glycolysis; pyruvate from D-glyceraldehyde 3-phosphate: step 3/5. Functionally, catalyzes the interconversion of 2-phosphoglycerate and 3-phosphoglycerate. This is 2,3-bisphosphoglycerate-independent phosphoglycerate mutase from Methanocorpusculum labreanum (strain ATCC 43576 / DSM 4855 / Z).